The sequence spans 190 residues: Peptide methionine sulfoxide reductase MsrA (190 aa).

C21 is an active-site residue.

This sequence belongs to the MsrA Met sulfoxide reductase family.

It carries out the reaction L-methionyl-[protein] + [thioredoxin]-disulfide + H2O = L-methionyl-(S)-S-oxide-[protein] + [thioredoxin]-dithiol. The enzyme catalyses [thioredoxin]-disulfide + L-methionine + H2O = L-methionine (S)-S-oxide + [thioredoxin]-dithiol. Functionally, has an important function as a repair enzyme for proteins that have been inactivated by oxidation. Catalyzes the reversible oxidation-reduction of methionine sulfoxide in proteins to methionine. The protein is Peptide methionine sulfoxide reductase MsrA of Polynucleobacter asymbioticus (strain DSM 18221 / CIP 109841 / QLW-P1DMWA-1) (Polynucleobacter necessarius subsp. asymbioticus).